The chain runs to 206 residues: Triafestin-1 (206 aa).

An N-terminal signal peptide occupies residues 1–18 (MKTILAVIFFGILAFAFA). Residue N55 is glycosylated (N-linked (GlcNAc...) asparagine).

This sequence belongs to the calycin superfamily. Triabin family. Interacts with host coagulation factor XII (F12) (inactive and activated) (via amino acids 1-77). Interacts with host high molecular weight kininogen (KNG1) (via amino acids 402-532). Salivary gland (at protein level).

The protein resides in the secreted. Zn(2+) modulates binding to host coagulation factor XII (F12) and high molecular weight kininogen (KNG1). Functionally, suppresses activation of the host plasma kallikrein-kinin system, leading to inhibition of the intrinsic coagulation pathway. Blocks host coagulation factor XII (F12) and prekallikrein (KLKB1) reciprocal activation without affecting their amidolytic activities. Blocks binding of host F12 and high molecular weight kininogen (KNG1) to negatively charged surfaces. Attenuates generation of bradykinin by interfering with activation of host kallikrein-kinin system. This chain is Triafestin-1, found in Triatoma infestans (Assassin bug).